The sequence spans 534 residues: Kelch repeat and BTB domain-containing protein 4 (534 aa).

The region spanning 61 to 128 is the BTB domain; sequence ADVTISVEGR…IYHGTVKLRA (68 aa). The region spanning 163–255 is the BACK domain; sequence CLQVMWLADR…SLKEIGENVH (93 aa). Kelch repeat units follow at residues 255–301, 302–344, 347–394, 396–446, and 448–497; these read HIYL…KHGG, DLYV…SVPG, AIYS…NLNG, IYLL…VHKD, and VFIV…VFRD.

In terms of assembly, component of the BCR(KBTBD4) E3 ubiquitin ligase complex, at least composed of CUL3, KBTBD4 and RBX1.

In terms of biological role, substrate-specific adapter of a BCR (BTB-CUL3-RBX1) E3 ubiquitin ligase complex which targets CoREST corepressor complex components RCOR1, KDM1A/LSD1 and HDAC2 for proteasomal degradation. RCOR1 is likely to be the primary target while degradation of KDM1A and HDAC2 is likely due to their association with RCOR1. Also targets RCOR3, MIER2 and MIER3 for proteasomal degradation as well as associated proteins ZNF217 and RREB1. Degradation is dependent on the presence of an ELM2 domain in the target proteins. The polypeptide is Kelch repeat and BTB domain-containing protein 4 (Kbtbd4) (Mus musculus (Mouse)).